Consider the following 157-residue polypeptide: 3-hydroxyacyl-[acyl-carrier-protein] dehydratase FabZ (157 aa).

The active site involves His58.

It belongs to the thioester dehydratase family. FabZ subfamily.

It is found in the cytoplasm. The enzyme catalyses a (3R)-hydroxyacyl-[ACP] = a (2E)-enoyl-[ACP] + H2O. Functionally, involved in unsaturated fatty acids biosynthesis. Catalyzes the dehydration of short chain beta-hydroxyacyl-ACPs and long chain saturated and unsaturated beta-hydroxyacyl-ACPs. This is 3-hydroxyacyl-[acyl-carrier-protein] dehydratase FabZ from Brucella abortus biovar 1 (strain 9-941).